The primary structure comprises 317 residues: Ribosomal protein L11 methyltransferase (317 aa).

S-adenosyl-L-methionine-binding residues include T169, G190, D211, and N256.

Belongs to the methyltransferase superfamily. PrmA family.

The protein resides in the cytoplasm. It carries out the reaction L-lysyl-[protein] + 3 S-adenosyl-L-methionine = N(6),N(6),N(6)-trimethyl-L-lysyl-[protein] + 3 S-adenosyl-L-homocysteine + 3 H(+). Its function is as follows. Methylates ribosomal protein L11. In Helicobacter hepaticus (strain ATCC 51449 / 3B1), this protein is Ribosomal protein L11 methyltransferase.